Reading from the N-terminus, the 429-residue chain is Glutamyl-tRNA reductase (429 aa).

Substrate-binding positions include 56-59 (TCNR), serine 119, 124-126 (EPQ), and glutamine 130. Cysteine 57 serves as the catalytic Nucleophile. NADP(+) is bound at residue 199–204 (GAGEMI).

This sequence belongs to the glutamyl-tRNA reductase family. As to quaternary structure, homodimer.

The catalysed reaction is (S)-4-amino-5-oxopentanoate + tRNA(Glu) + NADP(+) = L-glutamyl-tRNA(Glu) + NADPH + H(+). It participates in porphyrin-containing compound metabolism; protoporphyrin-IX biosynthesis; 5-aminolevulinate from L-glutamyl-tRNA(Glu): step 1/2. In terms of biological role, catalyzes the NADPH-dependent reduction of glutamyl-tRNA(Glu) to glutamate 1-semialdehyde (GSA). This is Glutamyl-tRNA reductase from Janthinobacterium sp. (strain Marseille) (Minibacterium massiliensis).